Reading from the N-terminus, the 714-residue chain is Transcription factor SFL2 (714 aa).

A DNA-binding region spans residues 15-134 (AFVHKLYTML…LVYIKRRSSS (120 aa)). Disordered stretches follow at residues 187–467 (YYQQ…VGVT), 565–658 (STSV…NNTN), and 670–714 (SHSQ…NMNK). Composition is skewed to pro residues over residues 193-207 (GQVPPPPPPSLPPHQ) and 223-235 (QPPPAPPAPPPQP). Residues 266 to 275 (LDQTQPLSYT) show a composition bias toward polar residues. Residues 276–285 (PQLEYQQQQY) are compositionally biased toward low complexity. Pro residues predominate over residues 286–296 (PQPPLPPPPPQ). Polar residues-rich tracts occupy residues 310-321 (DNLSRPSPNEQH) and 354-372 (SEGSPKTQPNHSVSLLNNE). Residues 376-389 (ESSTSSSSTTVTST) show a composition bias toward low complexity. Polar residues-rich tracts occupy residues 413-435 (SRMNNQQSFNRTPSISTPPTQNG) and 444-461 (LIPSNTESQSPTMVTGTD). Low complexity predominate over residues 574-591 (GPFSTSTSTSTTSPTLSS). Residues 599-608 (EPQNSTIANG) show a composition bias toward polar residues. Low complexity-rich tracts occupy residues 609 to 641 (TSIRSSISSSQSISSPPLTTTTTTTTTDQRQLS) and 648 to 658 (QQQQQPNNNTN). The segment covering 703–714 (SKSDDDTDNMNK) has biased composition (basic and acidic residues).

This sequence belongs to the HSF family.

The protein resides in the nucleus. In terms of biological role, transcription factor that plays a role of activator of filamentous growth and which is involved in invasive growth at a high temperature. Required for human oral epithelium colonization and damage. Promotes filamentous growth in EFG1- and FLO8-dependent manners. Antagonizes functions of SFL1. The protein is Transcription factor SFL2 (SFL2) of Candida albicans (strain SC5314 / ATCC MYA-2876) (Yeast).